Consider the following 204-residue polypeptide: Cytochrome bo(3) ubiquinol oxidase subunit 3 (204 aa).

Over methionine 1–isoleucine 31 the chain is Cytoplasmic. The helical transmembrane segment at tyrosine 32 to leucine 50 threads the bilayer. The Periplasmic segment spans residues valine 51 to leucine 66. The chain crosses the membrane as a helical span at residues proline 67–methionine 85. Topologically, residues alanine 86–tryptophan 101 are cytoplasmic. A helical transmembrane segment spans residues leucine 102–phenylalanine 120. Over histidine 121–leucine 142 the chain is Periplasmic. The helical transmembrane segment at valine 143–methionine 161 threads the bilayer. The Cytoplasmic segment spans residues valine 162 to tryptophan 184. Residues histidine 185–alanine 203 form a helical membrane-spanning segment. Residue methionine 204 is a topological domain, periplasmic.

This sequence belongs to the cytochrome c oxidase subunit 3 family. Heterooctamer of two A chains, two B chains, two C chains and two D chains.

The protein resides in the cell inner membrane. Cytochrome bo(3) ubiquinol terminal oxidase is the component of the aerobic respiratory chain of E.coli that predominates when cells are grown at high aeration. Has proton pump activity across the membrane in addition to electron transfer, pumping 2 protons/electron. This chain is Cytochrome bo(3) ubiquinol oxidase subunit 3 (cyoC), found in Escherichia coli O6:H1 (strain CFT073 / ATCC 700928 / UPEC).